The primary structure comprises 425 residues: Bifunctional phosphoribosylaminoimidazole carboxylase/phosphoribosylaminoimidazole succinocarboxamide synthetase (425 aa).

Ala2 is subject to N-acetylalanine. Residues 2-260 are SAICAR synthetase domain; it reads ATAEVLNIGR…WVADRVELLL (259 aa). Tyr22 carries the post-translational modification Phosphotyrosine. Ser27 bears the Phosphoserine mark. N6-acetyllysine is present on Lys36. Position 107 is a phosphoserine (Ser107). Residue Thr238 is modified to Phosphothreonine. Lys247 is modified (N6-acetyllysine). The linker stretch occupies residues 261-266; the sequence is KSNSQC. Positions 267–425 are AIR carboxylase domain; sequence RVVVLMGSTS…ADKKIRECNL (159 aa). Ser274 bears the Phosphoserine mark. Ser332 lines the CO2 pocket.

In the N-terminal section; belongs to the SAICAR synthetase family. This sequence in the C-terminal section; belongs to the AIR carboxylase family. Class II subfamily. In terms of assembly, homooctamer.

The catalysed reaction is 5-amino-1-(5-phospho-D-ribosyl)imidazole-4-carboxylate + L-aspartate + ATP = (2S)-2-[5-amino-1-(5-phospho-beta-D-ribosyl)imidazole-4-carboxamido]succinate + ADP + phosphate + 2 H(+). It carries out the reaction 5-amino-1-(5-phospho-D-ribosyl)imidazole-4-carboxylate + H(+) = 5-amino-1-(5-phospho-beta-D-ribosyl)imidazole + CO2. Its pathway is purine metabolism; IMP biosynthesis via de novo pathway; 5-amino-1-(5-phospho-D-ribosyl)imidazole-4-carboxamide from 5-amino-1-(5-phospho-D-ribosyl)imidazole-4-carboxylate: step 1/2. The protein operates within purine metabolism; IMP biosynthesis via de novo pathway; 5-amino-1-(5-phospho-D-ribosyl)imidazole-4-carboxylate from 5-amino-1-(5-phospho-D-ribosyl)imidazole (carboxylase route): step 1/1. Functionally, bifunctional phosphoribosylaminoimidazole carboxylase and phosphoribosylaminoimidazole succinocarboxamide synthetase catalyzing two reactions of the de novo purine biosynthetic pathway. This chain is Bifunctional phosphoribosylaminoimidazole carboxylase/phosphoribosylaminoimidazole succinocarboxamide synthetase, found in Rattus norvegicus (Rat).